Reading from the N-terminus, the 440-residue chain is Microtubule-associated tumor suppressor 1 homolog A (440 aa).

A disordered region spans residues 44–67 (KSRTNSKNPQPPTNGQPDLVPPES). Positions 69–401 (SRNVEYYKAQ…RLSMENEELL (333 aa)) form a coiled coil. The interval 407 to 440 (GDLNSPRKISPSPSLNLQSPRTSGMFSSPPVSPR) is disordered. The segment covering 417–432 (PSPSLNLQSPRTSGMF) has biased composition (polar residues).

Belongs to the MTUS1 family. Homodimer.

It is found in the mitochondrion. Its subcellular location is the golgi apparatus. It localises to the cell membrane. The protein resides in the nucleus. Functionally, may inhibit cell proliferation. The sequence is that of Microtubule-associated tumor suppressor 1 homolog A (mtus1a) from Danio rerio (Zebrafish).